The chain runs to 429 residues: Enolase (429 aa).

Q167 serves as a coordination point for (2R)-2-phosphoglycerate. Catalysis depends on E209, which acts as the Proton donor. Positions 246, 289, and 316 each coordinate Mg(2+). K341, R370, S371, and K392 together coordinate (2R)-2-phosphoglycerate. The Proton acceptor role is filled by K341.

This sequence belongs to the enolase family. In terms of assembly, component of the RNA degradosome, a multiprotein complex involved in RNA processing and mRNA degradation. It depends on Mg(2+) as a cofactor.

It localises to the cytoplasm. The protein resides in the secreted. The protein localises to the cell surface. It catalyses the reaction (2R)-2-phosphoglycerate = phosphoenolpyruvate + H2O. The protein operates within carbohydrate degradation; glycolysis; pyruvate from D-glyceraldehyde 3-phosphate: step 4/5. Its function is as follows. Catalyzes the reversible conversion of 2-phosphoglycerate (2-PG) into phosphoenolpyruvate (PEP). It is essential for the degradation of carbohydrates via glycolysis. The chain is Enolase from Pseudomonas entomophila (strain L48).